We begin with the raw amino-acid sequence, 476 residues long: Protein Cep89 homolog (476 aa).

Disordered regions lie at residues 1–29 (MSTR…KKNR) and 172–193 (LGEG…APYP). The span at 180–190 (GGSTKVSSSSA) shows a compositional bias: polar residues.

It localises to the cytoplasm. The protein resides in the cytosol. It is found in the mitochondrion intermembrane space. Its function is as follows. Required for mitochondrial complex IV activity. May be involved in non-associative learning. In Drosophila melanogaster (Fruit fly), this protein is Protein Cep89 homolog (Cep89).